The chain runs to 161 residues: Cyclic pyranopterin monophosphate synthase (161 aa).

Residues 78 to 80 (LCH) and 116 to 117 (ME) contribute to the substrate site. The active site involves Asp131.

Belongs to the MoaC family. Homohexamer; trimer of dimers.

It carries out the reaction (8S)-3',8-cyclo-7,8-dihydroguanosine 5'-triphosphate = cyclic pyranopterin phosphate + diphosphate. It functions in the pathway cofactor biosynthesis; molybdopterin biosynthesis. Its function is as follows. Catalyzes the conversion of (8S)-3',8-cyclo-7,8-dihydroguanosine 5'-triphosphate to cyclic pyranopterin monophosphate (cPMP). In Bordetella pertussis (strain Tohama I / ATCC BAA-589 / NCTC 13251), this protein is Cyclic pyranopterin monophosphate synthase.